Reading from the N-terminus, the 351-residue chain is DNA polymerase IV (351 aa).

Residues I4 to G185 form the UmuC domain. Residues D8 and D103 each contribute to the Mg(2+) site. E104 is an active-site residue.

The protein belongs to the DNA polymerase type-Y family. In terms of assembly, monomer. Mg(2+) serves as cofactor.

It localises to the cytoplasm. It catalyses the reaction DNA(n) + a 2'-deoxyribonucleoside 5'-triphosphate = DNA(n+1) + diphosphate. Its function is as follows. Poorly processive, error-prone DNA polymerase involved in untargeted mutagenesis. Copies undamaged DNA at stalled replication forks, which arise in vivo from mismatched or misaligned primer ends. These misaligned primers can be extended by PolIV. Exhibits no 3'-5' exonuclease (proofreading) activity. May be involved in translesional synthesis, in conjunction with the beta clamp from PolIII. This chain is DNA polymerase IV, found in Salmonella paratyphi B (strain ATCC BAA-1250 / SPB7).